A 962-amino-acid polypeptide reads, in one-letter code: Glycine dehydrogenase (decarboxylating) (962 aa).

Residue Lys-709 is modified to N6-(pyridoxal phosphate)lysine.

It belongs to the GcvP family. The glycine cleavage system is composed of four proteins: P, T, L and H. Requires pyridoxal 5'-phosphate as cofactor.

It carries out the reaction N(6)-[(R)-lipoyl]-L-lysyl-[glycine-cleavage complex H protein] + glycine + H(+) = N(6)-[(R)-S(8)-aminomethyldihydrolipoyl]-L-lysyl-[glycine-cleavage complex H protein] + CO2. Functionally, the glycine cleavage system catalyzes the degradation of glycine. The P protein binds the alpha-amino group of glycine through its pyridoxal phosphate cofactor; CO(2) is released and the remaining methylamine moiety is then transferred to the lipoamide cofactor of the H protein. The sequence is that of Glycine dehydrogenase (decarboxylating) from Shewanella pealeana (strain ATCC 700345 / ANG-SQ1).